We begin with the raw amino-acid sequence, 115 residues long: Synaptobrevin homolog 2 (115 aa).

Residues 1–16 are compositionally biased toward low complexity; it reads MSSSVPYDPYVPPEES. The disordered stretch occupies residues 1–28; sequence MSSSVPYDPYVPPEESNSGANPNSQNKT. Residues 1–93 lie on the Cytoplasmic side of the membrane; sequence MSSSVPYDPY…MWWKDLKMRM (93 aa). The segment covering 17–28 has biased composition (polar residues); sequence NSGANPNSQNKT. Positions 27–87 constitute a v-SNARE coiled-coil homology domain; sequence KTAALRQEID…NRVRKQMWWK (61 aa). Residue Ser58 is modified to Phosphoserine. Residue Lys62 forms a Glycyl lysine isopeptide (Lys-Gly) (interchain with G-Cter in ubiquitin) linkage. A lipid anchor (S-palmitoyl cysteine) is attached at Cys94. Residues 94 to 112 traverse the membrane as a helical; Anchor for type IV membrane protein segment; the sequence is CLFLVVIILLVVIIVPIVV. Residues 113–115 lie on the Vesicular side of the membrane; the sequence is HFS.

The protein belongs to the synaptobrevin family. Palmitoylated by SWF1.

It localises to the endomembrane system. In terms of biological role, SNC1 and SNC2 are vesicle-targeting proteins essential for normal secretory traffic between the Golgi and the plasma membrane. They may also be involved in vesicle fusion. The chain is Synaptobrevin homolog 2 (SNC2) from Saccharomyces cerevisiae (strain ATCC 204508 / S288c) (Baker's yeast).